We begin with the raw amino-acid sequence, 293 residues long: MATGAVLPRLLGAGVRAAPRGRAAQRGRTLGSAAAAAAREPERDSDRSARILSEPLKHSDFFNVKELFSVRSLFNARVHLGHKAGCRHRFMEPYIFGSRLGQDIIDLEQTATHLQLALNFTAHVAFRGGIILFVSRARQFSHLIESTARSCGEYAHTRYFKGGLLTNAPLLLGARVRLPDLIIFLHTLNNVFEPHVAVRDAAKMSIPTVGVVDTNCNPCLITYPVPGNDDSPPAVQLFCQLFQTAVTRAKEKRRQLEALYRLQGAPGPHPANPAAPGAPSPGAQAQLGMGHSP.

Residues 21 to 38 show a composition bias toward low complexity; sequence GRAAQRGRTLGSAAAAAA. Disordered regions lie at residues 21–49 and 263–293; these read GRAA…DRSA and QGAP…GHSP. Positions 39–49 are enriched in basic and acidic residues; that stretch reads REPERDSDRSA. Residues 267-279 are compositionally biased toward pro residues; the sequence is GPHPANPAAPGAP.

This sequence belongs to the universal ribosomal protein uS2 family. In terms of assembly, component of the mitochondrial ribosome small subunit (28S) which comprises a 12S rRNA and about 30 distinct proteins.

The protein localises to the mitochondrion. Its function is as follows. Required for mitoribosome formation and stability, and mitochondrial translation. This chain is Small ribosomal subunit protein uS2m (MRPS2), found in Bos taurus (Bovine).